The primary structure comprises 892 residues: Inner centromere protein B (892 aa).

8 disordered regions span residues 50–124 (AEPE…KRMT), 160–182 (EHERRSAEQKLRESEIEDSEMKT), 255–286 (LVNEQPLNLSNESATPTGSKSDRRSVRRSLVV), 305–470 (KRES…PPPH), 502–555 (KRNT…RRED), 569–687 (QLEE…RERE), 702–760 (ERAA…AAAA), and 797–819 (NYGMDLNSDDSTDDESQPRKPIP). A compositionally biased stretch (basic residues) spans 60–69 (SQKRRRKKRT). Residues 90–99 (SANWSSSVRR) are compositionally biased toward low complexity. Over residues 259–272 (QPLNLSNESATPTG) the composition is skewed to polar residues. Basic and acidic residues predominate over residues 305–315 (KRESMTREAVR). Residues 316–326 (KSIRQSISKKK) show a composition bias toward basic residues. Over residues 332 to 343 (SSTSSQRSCHSS) the composition is skewed to low complexity. Residues 431 to 444 (RAVDELSDDERPSE) show a composition bias toward basic and acidic residues. The span at 455 to 470 (PSPPCPPSKIVKPPPH) shows a compositional bias: pro residues. Composition is skewed to basic and acidic residues over residues 509–555 (PDPK…RRED), 569–602 (QLEEEKKKKFEQKFAQIDEKSEKVREDRMAEEKA), 609–687 (KKQE…RERE), and 702–754 (ERAA…KAKE). Positions 512-725 (KSEEKERQRL…EERKKREQQQ (214 aa)) are SAH. Residues 802 to 876 (LNSDDSTDDE…RTSSAVWHSP (75 aa)) form an IN box region. 2 positions are modified to phosphoserine: S869 and S870.

It belongs to the INCENP family. Component of the CPC at least composed of survivin/birc5, incenp, cdca8/borealin and/or cdca9/dasra-A, and aurkb/aurora-B. Interacts (via C-terminus) with aurkb (via N-terminus and kinase domain). Interacts (via N-terminus) with birc5.1, birc5.2, cdca8 and cdca9. Interacts with mtus1.

The protein resides in the nucleus. It localises to the chromosome. The protein localises to the centromere. Its subcellular location is the cytoplasm. It is found in the cytoskeleton. The protein resides in the spindle. It localises to the midbody. The protein localises to the kinetochore. Functionally, component of the chromosomal passenger complex (CPC), a complex that acts as a key regulator of mitosis. The CPC complex has essential functions at the centromere in ensuring correct chromosome alignment and segregation and is required for chromatin-induced microtubule stabilization and spindle assembly. Acts as a scaffold regulating CPC localization and activity. The C-terminus associates with aurkb/aurora-B, the N-terminus associated with cdca8/borealin and/or cdca9/dasra-A tethers the CPC to the inner centromere, and the microtubule binding activity within the central SAH domain directs aurkb/aurora-B toward substrates near microtubules. Activates aurkb. This Xenopus laevis (African clawed frog) protein is Inner centromere protein B (incenp-b).